A 1355-amino-acid polypeptide reads, in one-letter code: Transcription factor MAR1 (1355 aa).

Residues 23 to 52 (CTICRKRKVKCDKTRPHCNQCTKTGVAHLC) constitute a DNA-binding region (zn(2)-C6 fungal-type). Disordered stretches follow at residues 586–614 (TTDN…KDTN), 918–942 (SVPS…LNQD), and 1221–1253 (PPIS…TSSL). The span at 589–603 (NTRSGPPSNSNRNGS) shows a compositional bias: low complexity. The span at 604-614 (ETPSVSPKDTN) shows a compositional bias: polar residues. Positions 918 to 927 (SVPSSCNSSS) are enriched in low complexity. Residues 1225 to 1238 (SAKNNMAWGTTPES) show a composition bias toward polar residues.

It localises to the nucleus. Its function is as follows. Transcription factor that contributes to plasma membrane sphingolipid incorporation and membrane permeability, decreasing fluconazole accumulation. Regulates 337 genes under fluconazole stress, including several related to lipid biosynthesis pathways such as RSB1, encoding a sphingoid long-chain base efflux transporter. Associates with the promoter of RSB1 in the region containing two 5'-CCCCTCC-3' motifs and increases its promoter occupancy upon fluconazole stress. In Candida glabrata (strain ATCC 2001 / BCRC 20586 / JCM 3761 / NBRC 0622 / NRRL Y-65 / CBS 138) (Yeast), this protein is Transcription factor MAR1.